The chain runs to 934 residues: Desmocollin 2-like protein (934 aa).

Cadherin domains follow at residues 167-274 (RWRP…APEF), 274-381 (FTGN…PPTF), 382-494 (KEKL…GPEF), and 495-600 (NPNI…IPVI). Topologically, residues 167-716 (RWRPLPFSVV…SASVSLGNYG (550 aa)) are extracellular. N197, N296, and N316 each carry an N-linked (GlcNAc...) asparagine glycan. N-linked (GlcNAc...) asparagine glycosylation is found at N509, N565, and N569. The helical transmembrane segment at 717–737 (ILALVLSGLLLLLLCLFLIFF) threads the bilayer. Over 738 to 934 (CTTKRDKLQI…ICYTTNKTGK (197 aa)) the chain is Cytoplasmic.

In terms of tissue distribution, expressed at low levels in the brain and heart.

It is found in the cell junction. The protein resides in the desmosome. Its subcellular location is the cell membrane. A component of desmosome cell-cell junctions which are required for positive regulation of cellular adhesion. Involved in the interaction of plaque proteins and intermediate filaments mediating cell-cell adhesion. Involved in the formation and structural organization of desmosome cell-cell junctions during embryonic development. Required for embryogenesis, specifically for progression of epiboly and normal convergence-extension movements during gastrulation. Required for the development of desmosomal-rich midlines in the heart. Plays an important role in ventricular contraction and resulting heart stroke volume. The chain is Desmocollin 2-like protein from Danio rerio (Zebrafish).